The primary structure comprises 369 residues: Anthranilate phosphoribosyltransferase (369 aa).

Residues glycine 99, 102-103, 109-112, 127-135, and serine 139 each bind 5-phospho-alpha-D-ribose 1-diphosphate; these read GD, NVST, and KHGNRGVSS. Glycine 99 serves as a coordination point for anthranilate. Serine 111 is a binding site for Mg(2+). Asparagine 130 serves as a coordination point for anthranilate. Arginine 185 provides a ligand contact to anthranilate. The Mg(2+) site is built by aspartate 244 and glutamate 245.

This sequence belongs to the anthranilate phosphoribosyltransferase family. In terms of assembly, homodimer. Requires Mg(2+) as cofactor.

The enzyme catalyses N-(5-phospho-beta-D-ribosyl)anthranilate + diphosphate = 5-phospho-alpha-D-ribose 1-diphosphate + anthranilate. It participates in amino-acid biosynthesis; L-tryptophan biosynthesis; L-tryptophan from chorismate: step 2/5. Functionally, catalyzes the transfer of the phosphoribosyl group of 5-phosphorylribose-1-pyrophosphate (PRPP) to anthranilate to yield N-(5'-phosphoribosyl)-anthranilate (PRA). In Psychrobacter sp. (strain PRwf-1), this protein is Anthranilate phosphoribosyltransferase.